We begin with the raw amino-acid sequence, 100 residues long: NADH-quinone oxidoreductase subunit K (100 aa).

Transmembrane regions (helical) follow at residues 4 to 24 (LFHG…SLIV), 28 to 48 (ILFM…ALVV), and 60 to 80 (IMYI…LALL).

This sequence belongs to the complex I subunit 4L family. In terms of assembly, NDH-1 is composed of 13 different subunits. Subunits NuoA, H, J, K, L, M, N constitute the membrane sector of the complex.

It is found in the cell membrane. It carries out the reaction a quinone + NADH + 5 H(+)(in) = a quinol + NAD(+) + 4 H(+)(out). Its function is as follows. NDH-1 shuttles electrons from NADH, via FMN and iron-sulfur (Fe-S) centers, to quinones in the respiratory chain. The immediate electron acceptor for the enzyme in this species is believed to be ubiquinone. Couples the redox reaction to proton translocation (for every two electrons transferred, four hydrogen ions are translocated across the cytoplasmic membrane), and thus conserves the redox energy in a proton gradient. The protein is NADH-quinone oxidoreductase subunit K of Buchnera aphidicola subsp. Schizaphis graminum (strain Sg).